The primary structure comprises 328 residues: MVKLAIDMMGGDNAPDIVLEAVQKAVEDFKDLEIILFGDEKKYNLNHERIEFRHCSEKIEMEDEPVRAIKRKKDSSMVKMAEAVKSGEADGCVSAGNTGALMSAGLFIVGRIKGVARPALVVTLPTIDGKGFVFLDVGANADAKPEHLLQYAQLGDIYAQKIRGIDNPKISLLNIGTEPAKGNSLTKKSYELLNQDHSLNFVGNIEAKTLMDGDTDVVVTDGYTGNMVLKNLEGTAKSIGKMLKDTIMSSTKNKIAGAILKKDLAEFAKKMDYSEYGGSVLLGLEGTVVKAHGSSNAKAFYSAIRQAKIAGEQNIVQTMKETVGESNE.

This sequence belongs to the PlsX family. Homodimer. Probably interacts with PlsY.

Its subcellular location is the cytoplasm. The catalysed reaction is a fatty acyl-[ACP] + phosphate = an acyl phosphate + holo-[ACP]. It participates in lipid metabolism; phospholipid metabolism. Its function is as follows. Catalyzes the reversible formation of acyl-phosphate (acyl-PO(4)) from acyl-[acyl-carrier-protein] (acyl-ACP). This enzyme utilizes acyl-ACP as fatty acyl donor, but not acyl-CoA. This Staphylococcus aureus (strain MRSA252) protein is Phosphate acyltransferase.